Here is a 92-residue protein sequence, read N- to C-terminus: Acylphosphatase (92 aa).

The 90-residue stretch at 3 to 92 folds into the Acylphosphatase-like domain; the sequence is TKHVLVSGIV…GPRSTHFEVT (90 aa). Active-site residues include R18 and N36.

The protein belongs to the acylphosphatase family.

The catalysed reaction is an acyl phosphate + H2O = a carboxylate + phosphate + H(+). The polypeptide is Acylphosphatase (acyP) (Alcanivorax borkumensis (strain ATCC 700651 / DSM 11573 / NCIMB 13689 / SK2)).